An 826-amino-acid polypeptide reads, in one-letter code: E3 ubiquitin-protein ligase SH3RF1 (826 aa).

The segment at 12–53 adopts an RING-type zinc-finger fold; it reads CPVCLERLDASAKVLPCQHTFCKRCLLGIVSSRKELRCPECR. The disordered stretch occupies residues 80–130; that stretch reads PRKAGDGGSAGNSTNALRAQGSVTTNGGLNDAQNTQSGQQRIQARSPPVRG. Polar residues predominate over residues 90–122; that stretch reads GNSTNALRAQGSVTTNGGLNDAQNTQSGQQRIQ. SH3 domains are found at residues 132–191 and 194–257; these read PQLP…IIKP and QPPP…FNSA. Positions 266–319 are disordered; that stretch reads KPSGADTGEGSSGTSHSGNSQKQADAKKNTKKRHSFTSLTMSNKSSQSVQNRHS. The span at 273–285 shows a compositional bias: low complexity; sequence GEGSSGTSHSGNS. The span at 301 to 317 shows a compositional bias: polar residues; sequence FTSLTMSNKSSQSVQNR. Residues 398-459 enclose the SH3 3 domain; the sequence is ARPSVFIAIY…PGNYVAPVTR (62 aa). 2 disordered regions span residues 647-694 and 725-759; these read NSAA…QTNS and DSVS…CSSL. Residues 652 to 663 are compositionally biased toward basic and acidic residues; sequence KQDKDSKKEKKG. Residues 767–826 enclose the SH3 4 domain; sequence RPCERYRVMVSYPPQSEAELELKEGDIVFVHKKREDGWFKGTLQRNGKTGLFPGSFVENI.

Belongs to the SH3RF family. Autoubiquitinated. Ubiquitinated by SH3RF2, leading to proteasome-mediated degradation.

It localises to the cytoplasm. The protein localises to the perinuclear region. The protein resides in the cell projection. It is found in the lamellipodium. Its subcellular location is the golgi apparatus. It localises to the trans-Golgi network. The catalysed reaction is S-ubiquitinyl-[E2 ubiquitin-conjugating enzyme]-L-cysteine + [acceptor protein]-L-lysine = [E2 ubiquitin-conjugating enzyme]-L-cysteine + N(6)-ubiquitinyl-[acceptor protein]-L-lysine.. It participates in protein modification; protein ubiquitination. In terms of biological role, has E3 ubiquitin-protein ligase activity. In the absence of an external substrate, it can catalyze self-ubiquitination. Acts as a scaffold protein that contributes to the effective activation of the JNK signaling pathway. Plays an essential role in the anterior neural development. The protein is E3 ubiquitin-protein ligase SH3RF1 (sh3rf1) of Xenopus laevis (African clawed frog).